We begin with the raw amino-acid sequence, 305 residues long: U6 small nuclear RNA (adenine-(43)-N(6))-methyltransferase (305 aa).

Arg87, Gly112, Glu135, Thr166, and Asn188 together coordinate S-adenosyl-L-methionine. The disordered stretch occupies residues 197-221 (PNPLGGNTRNPERRPAPNNARTGSQ).

It belongs to the methyltransferase superfamily. METTL16/RlmF family.

The catalysed reaction is adenosine in U6 snRNA + S-adenosyl-L-methionine = N(6)-methyladenosine in U6 snRNA + S-adenosyl-L-homocysteine + H(+). In terms of biological role, RNA N6-methyltransferase that mediates N6-methylation of adenine of U6 small nuclear RNA (U6 snRNA). The chain is U6 small nuclear RNA (adenine-(43)-N(6))-methyltransferase from Drosophila melanogaster (Fruit fly).